We begin with the raw amino-acid sequence, 299 residues long: Putative adenosine/adenine deaminase (299 aa).

Zn(2+) is bound by residues His16 and His18. Positions 18 and 157 each coordinate substrate. His184 contacts Zn(2+). Catalysis depends on Glu187, which acts as the Proton donor. Residue Asp265 participates in Zn(2+) binding. Position 266 (Asp266) interacts with substrate.

Belongs to the metallo-dependent hydrolases superfamily. Adenosine and AMP deaminases family. Zn(2+) serves as cofactor.

Putative nucleoside deaminase. May catalyze the hydrolytic deamination of adenosine or some similar substrate and play a role in purine metabolism. The protein is Putative adenosine/adenine deaminase of Treponema pallidum (strain Nichols).